Reading from the N-terminus, the 429-residue chain is Probable M18 family aminopeptidase 2 (429 aa).

Zn(2+) is bound by residues His82, His156, and His401.

It belongs to the peptidase M18 family. It depends on Zn(2+) as a cofactor.

This chain is Probable M18 family aminopeptidase 2, found in Pseudomonas savastanoi pv. phaseolicola (strain 1448A / Race 6) (Pseudomonas syringae pv. phaseolicola (strain 1448A / Race 6)).